Consider the following 127-residue polypeptide: Large ribosomal subunit protein bL12 (127 aa).

This sequence belongs to the bacterial ribosomal protein bL12 family. In terms of assembly, homodimer. Part of the ribosomal stalk of the 50S ribosomal subunit. Forms a multimeric L10(L12)X complex, where L10 forms an elongated spine to which 2 to 4 L12 dimers bind in a sequential fashion. Binds GTP-bound translation factors.

Functionally, forms part of the ribosomal stalk which helps the ribosome interact with GTP-bound translation factors. Is thus essential for accurate translation. The chain is Large ribosomal subunit protein bL12 from Streptococcus thermophilus (strain CNRZ 1066).